The chain runs to 148 residues: Calmodulin (148 aa).

Residue alanine 2 is modified to N-acetylalanine. EF-hand domains follow at residues 8-43, 44-79, 81-116, and 116-148; these read DQIS…LGQN, PTEA…KMKD, DSEE…LGEK, and KLTD…MMAK. Ca(2+) contacts are provided by aspartate 21, aspartate 23, aspartate 25, cysteine 27, glutamate 32, aspartate 57, aspartate 59, asparagine 61, threonine 63, glutamate 68, aspartate 94, aspartate 96, asparagine 98, and glutamate 105. Lysine 116 carries the post-translational modification N6,N6,N6-trimethyllysine. Residues aspartate 129, aspartate 131, aspartate 133, glutamine 135, and glutamate 140 each coordinate Ca(2+).

This sequence belongs to the calmodulin family.

In terms of biological role, calmodulin mediates the control of a large number of enzymes, ion channels and other proteins by Ca(2+). Among the enzymes to be stimulated by the calmodulin-Ca(2+) complex are a number of protein kinases and phosphatases. The sequence is that of Calmodulin (CAMF1) from Fagus sylvatica (Beechnut).